Consider the following 736-residue polypeptide: ATP-dependent zinc metalloprotease FtsH (736 aa).

Disordered stretches follow at residues 1–39 (MDSNVDSQRVPDGQIFFRPVHPGISGKDMESGTSDGQQR) and 57–83 (QQTQNRTGFASADTKQGSPEGADRKKM). The Cytoplasmic portion of the chain corresponds to 1–87 (MDSNVDSQRV…ADRKKMPPGK (87 aa)). Positions 57 to 73 (QQTQNRTGFASADTKQG) are enriched in polar residues. Residues 88 to 108 (AWLWFVLILIVNFLMVRLLIP) traverse the membrane as a helical segment. Residues 109–205 (DAEQPVMVPY…KPIHEERSPW (97 aa)) lie on the Periplasmic side of the membrane. The helical transmembrane segment at 206–226 (ATIVYSFGPGLLFIAFYIWLF) threads the bilayer. The Cytoplasmic portion of the chain corresponds to 227–736 (RRMAQQGGLG…VSLPGVAGPS (510 aa)). Residue 301–308 (GAPGTGKT) participates in ATP binding. Residue His-522 participates in Zn(2+) binding. Glu-523 is a catalytic residue. Residues His-526 and Asp-598 each coordinate Zn(2+). Residues 706–736 (PALDAGKLPVPDGGDKNAEPSVSLPGVAGPS) form a disordered region.

This sequence in the central section; belongs to the AAA ATPase family. It in the C-terminal section; belongs to the peptidase M41 family. Homohexamer. Zn(2+) is required as a cofactor.

The protein resides in the cell inner membrane. Acts as a processive, ATP-dependent zinc metallopeptidase for both cytoplasmic and membrane proteins. Plays a role in the quality control of integral membrane proteins. The protein is ATP-dependent zinc metalloprotease FtsH of Syntrophus aciditrophicus (strain SB).